Here is a 1117-residue protein sequence, read N- to C-terminus: Cytospin-A (1117 aa).

3 disordered regions span residues 1–176 (MKKA…NQIS), 293–323 (SLSP…GSVE), and 358–390 (SSDD…NASE). Over residues 45–90 (TAASLSKTKSSDDLLAGMAGGVTVTNGVKGKKSTCPSAAPSASAPA) the composition is skewed to low complexity. A compositionally biased stretch (polar residues) spans 93 to 117 (TVENKSKISTGTASSTKRSTSTGNK). Basic and acidic residues-rich tracts occupy residues 120–131 (SSTRERLRERTR) and 158–171 (TATE…KSKS). Residues 168–280 (KSKSDNQISD…LNALGFSLEQ (113 aa)) are a coiled coil. The segment covering 293–303 (SLSPEITPGNQ) has biased composition (polar residues). Residues 358–377 (SSDDALDAPSSSESEGIPSI) show a composition bias toward low complexity. Phosphoserine occurs at positions 384, 385, and 389. Coiled coils occupy residues 394–449 (ACLT…MESL) and 487–807 (RYME…RGRV). 3 positions are modified to phosphoserine: S868, S881, and S887. Residues 920–997 (TSSASRPASL…PTTRSRIREE (78 aa)) are disordered. The span at 946–956 (RSSEEVKRDIS) shows a compositional bias: basic and acidic residues. Residues 971-990 (TTSPQLSLSSSPTASVTPTT) show a composition bias toward low complexity. The 106-residue stretch at 1011–1116 (GSKRNALLKW…YVTAIYKYFE (106 aa)) folds into the Calponin-homology (CH) domain.

Belongs to the cytospin-A family. In terms of assembly, may interact with both microtubules and actin cytoskeleton.

It is found in the cytoplasm. The protein resides in the cytoskeleton. Its subcellular location is the spindle. It localises to the cell junction. The protein localises to the gap junction. Its function is as follows. Involved in cytokinesis and spindle organization. May play a role in actin cytoskeleton organization and microtubule stabilization and hence required for proper cell adhesion and migration. The polypeptide is Cytospin-A (SPECC1L) (Homo sapiens (Human)).